A 132-amino-acid polypeptide reads, in one-letter code: Small ribosomal subunit protein uS8 (132 aa).

The protein belongs to the universal ribosomal protein uS8 family. As to quaternary structure, part of the 30S ribosomal subunit. Contacts proteins S5 and S12.

In terms of biological role, one of the primary rRNA binding proteins, it binds directly to 16S rRNA central domain where it helps coordinate assembly of the platform of the 30S subunit. This is Small ribosomal subunit protein uS8 from Syntrophomonas wolfei subsp. wolfei (strain DSM 2245B / Goettingen).